Here is a 548-residue protein sequence, read N- to C-terminus: MTITLDGASLTLADIDAVARGGAKVAITGDADVLARVHGSRDVIARAVERGEEIYGVTTLFGGMADVHVTRDQLIDVQKIALWQHKSTTGPRLPDADVRAAMLLRANSLMRGASGVRIALIERLVAFLNAGASPQVYQRGSIGASGDLVPLTYIGASILGLSPEFLVDLDGETLDCHTVLAKLGFTPMDPDPKEGLALNNGTGACTGVAANVMARALDAATMALGVHALFAQALLATDQSFDPYIHAQKPHPGQVWSAARMAELLTGGRTIRSEAGGDRARRKGDLIQDRYGIRCLPQFFGPIVDGLSTAARQIETEANTANDNPLINPATGETFHTGNFLAQYTAIAMDSTRYLIGLMCKHIDSQIALMITPAFSNGLTPALVGNMDTGVNVGLKSLHIGMNQMSTQISYLGQSVADRFPTHAEMYNQNINSQAMNAANLARDQMDVTEHFLAAALLTGVQAVEVRSRVETGSCDARDILSPATVPLYEAARVAAAGRPDKARTIVWDDMDGFLQPKVEGLLADIGSRGNVHAALQALRSSLDTFRA.

The active-site Proton donor/acceptor is the Tyr55. Positions Ala144–Gly146 form a cross-link, 5-imidazolinone (Ala-Gly). Position 145 is a 2,3-didehydroalanine (Ser) (Ser145). Positions 200, 288, 294, 324, 396, 425, and 428 each coordinate (E)-cinnamate.

Belongs to the PAL/histidase family. As to quaternary structure, homotetramer. Contains an active site 4-methylidene-imidazol-5-one (MIO), which is formed autocatalytically by cyclization and dehydration of residues Ala-Ser-Gly.

It catalyses the reaction L-phenylalanine = (E)-cinnamate + NH4(+). The enzyme catalyses L-tyrosine = (E)-4-coumarate + NH4(+). The catalysed reaction is 3,4-dimethoxy-L-phenylalanine = 3,4-dimethoxy-(E)-cinnamate + NH4(+). It participates in phenylpropanoid metabolism; trans-cinnamate biosynthesis; trans-cinnamate from L-phenylalanine: step 1/1. Aromatic ammonia-lyase (AAL) that shows reduced activity to catalyze the non-oxidative ammonia elimination from the canonical AAL substrates L-Phe and L-Tyr, contrasted by its pronounced efficiency towards substrates with electron-donor aromatic substituents such as 3,4-dimethoxy-L-phenylalanine. Is also able to catalyze the reverse reaction in vitro, i.e. the ammonia addition reaction to cinnamate derivatives, producing enantiopure phenylalanine derivatives. Shows no activity with L-His. The sequence is that of Aromatic ammonia-lyase from Loktanella atrilutea.